A 405-amino-acid polypeptide reads, in one-letter code: Argininosuccinate synthase (405 aa).

Residues 12 to 20 (AYSGGLDTS) and Ala40 each bind ATP. The L-citrulline site is built by Tyr92 and Ser97. Gly122 serves as a coordination point for ATP. L-aspartate-binding residues include Thr124, Asn128, and Asp129. Asn128 is a binding site for L-citrulline. The L-citrulline site is built by Arg132, Ser181, Ser190, Glu266, and Tyr278.

This sequence belongs to the argininosuccinate synthase family. Type 1 subfamily. In terms of assembly, homotetramer.

The protein resides in the cytoplasm. It carries out the reaction L-citrulline + L-aspartate + ATP = 2-(N(omega)-L-arginino)succinate + AMP + diphosphate + H(+). The protein operates within amino-acid biosynthesis; L-arginine biosynthesis; L-arginine from L-ornithine and carbamoyl phosphate: step 2/3. In Edwardsiella ictaluri (strain 93-146), this protein is Argininosuccinate synthase.